The following is a 338-amino-acid chain: Phosphate acyltransferase (338 aa).

It belongs to the PlsX family. Homodimer. Probably interacts with PlsY.

It localises to the cytoplasm. The catalysed reaction is a fatty acyl-[ACP] + phosphate = an acyl phosphate + holo-[ACP]. It functions in the pathway lipid metabolism; phospholipid metabolism. Functionally, catalyzes the reversible formation of acyl-phosphate (acyl-PO(4)) from acyl-[acyl-carrier-protein] (acyl-ACP). This enzyme utilizes acyl-ACP as fatty acyl donor, but not acyl-CoA. The protein is Phosphate acyltransferase of Endomicrobium trichonymphae.